The chain runs to 415 residues: Granaticin polyketide putative beta-ketoacyl synthase 2 (415 aa).

Positions 6–406 constitute a Ketosynthase family 3 (KS3) domain; that stretch reads RRRAVVTGLS…GFNSAVVVTL (401 aa).

It belongs to the thiolase-like superfamily. Beta-ketoacyl-ACP synthases family.

The protein operates within antibiotic biosynthesis; granaticin biosynthesis. The sequence is that of Granaticin polyketide putative beta-ketoacyl synthase 2 (gra-orf2) from Streptomyces violaceoruber.